Here is a 285-residue protein sequence, read N- to C-terminus: HTH-type transcriptional regulator MurR (285 aa).

The HTH rpiR-type domain occupies 1–77 (MLYLTKIRNA…MALIGEYSAS (77 aa)). The segment at residues 37-56 (SRKMAKQLGISQSSIVKFAQ) is a DNA-binding region (H-T-H motif). The SIS domain maps to 128–268 (IIEVISKAPF…FVGLVQLNDV (141 aa)).

As to quaternary structure, homotetramer.

Its pathway is amino-sugar metabolism; N-acetylmuramate degradation [regulation]. Functionally, represses the expression of the murPQ operon involved in the uptake and degradation of N-acetylmuramic acid (MurNAc). Binds to two adjacent inverted repeats within the operator region. MurNAc 6-phosphate, the substrate of MurQ, is the specific inducer that weakens binding of MurR to the operator. This chain is HTH-type transcriptional regulator MurR, found in Shigella sonnei (strain Ss046).